Reading from the N-terminus, the 356-residue chain is Iron-regulated protein A (356 aa).

The N-terminal stretch at 1–44 (MIVTGSQVRQGLNTWFVLPLRRTAIGLGCAGVATLFSACGQTQA) is a signal peptide. Hydrophilic stretches follow at residues 75–145 (QALQ…EQRE) and 240–310 (GGPL…ATAR).

As to quaternary structure, the iron-regulated protein A is one unit of the protein complex CPVI-4, which is synthesized under iron deficient conditions.

It localises to the cell inner membrane. Its function is as follows. IrpA occurs under iron-deficient growth conditions in cyanobacterium Synechococcus and disappears in cells recovering from iron starvation. It seems to be involved in iron acquisition, uptake or storage. This is Iron-regulated protein A (irpA) from Synechococcus elongatus (strain ATCC 33912 / PCC 7942 / FACHB-805) (Anacystis nidulans R2).